We begin with the raw amino-acid sequence, 82 residues long: Small ribosomal subunit protein uS17 (82 aa).

This sequence belongs to the universal ribosomal protein uS17 family. As to quaternary structure, part of the 30S ribosomal subunit.

In terms of biological role, one of the primary rRNA binding proteins, it binds specifically to the 5'-end of 16S ribosomal RNA. The protein is Small ribosomal subunit protein uS17 of Shewanella sp. (strain W3-18-1).